A 151-amino-acid chain; its full sequence is 3-hydroxyacyl-[acyl-carrier-protein] dehydratase FabZ (151 aa).

His-53 is a catalytic residue.

This sequence belongs to the thioester dehydratase family. FabZ subfamily.

The protein resides in the cytoplasm. It catalyses the reaction a (3R)-hydroxyacyl-[ACP] = a (2E)-enoyl-[ACP] + H2O. Functionally, involved in unsaturated fatty acids biosynthesis. Catalyzes the dehydration of short chain beta-hydroxyacyl-ACPs and long chain saturated and unsaturated beta-hydroxyacyl-ACPs. The sequence is that of 3-hydroxyacyl-[acyl-carrier-protein] dehydratase FabZ from Erythrobacter litoralis (strain HTCC2594).